The primary structure comprises 263 residues: Hemin import ATP-binding protein HmuV (263 aa).

An ABC transporter domain is found at 2–242 (IEARDVSVDI…DLIEKVFDCR (241 aa)). Position 34–41 (34–41 (GPNGSGKT)) interacts with ATP.

The protein belongs to the ABC transporter superfamily. Heme (hemin) importer (TC 3.A.1.14.5) family. In terms of assembly, the complex is composed of two ATP-binding proteins (HmuV), two transmembrane proteins (HmuU) and a solute-binding protein (HmuT).

The protein localises to the cell inner membrane. Its function is as follows. Part of the ABC transporter complex HmuTUV involved in hemin import. Responsible for energy coupling to the transport system. The chain is Hemin import ATP-binding protein HmuV from Mesorhizobium japonicum (strain LMG 29417 / CECT 9101 / MAFF 303099) (Mesorhizobium loti (strain MAFF 303099)).